Here is a 91-residue protein sequence, read N- to C-terminus: Putative membrane protein insertion efficiency factor (91 aa).

A disordered region spans residues 72–91 (SGGNDPVPEKLTHINHQHEK). The span at 78 to 91 (VPEKLTHINHQHEK) shows a compositional bias: basic and acidic residues.

Belongs to the UPF0161 family.

The protein localises to the cell inner membrane. Functionally, could be involved in insertion of integral membrane proteins into the membrane. This chain is Putative membrane protein insertion efficiency factor, found in Pseudoalteromonas translucida (strain TAC 125).